The primary structure comprises 399 residues: Dual-specificity RNA methyltransferase RlmN (399 aa).

Residue E121 is the Proton acceptor of the active site. A Radical SAM core domain is found at 127-376 (DVDRGTLCVS…VRTPRGRDIL (250 aa)). A disulfide bond links C134 and C379. [4Fe-4S] cluster is bound by residues C141, C145, and C148. S-adenosyl-L-methionine is bound by residues 205–206 (GE), S237, 259–261 (SLH), and N336. C379 serves as the catalytic S-methylcysteine intermediate.

The protein belongs to the radical SAM superfamily. RlmN family. The cofactor is [4Fe-4S] cluster.

The protein resides in the cytoplasm. It catalyses the reaction adenosine(2503) in 23S rRNA + 2 reduced [2Fe-2S]-[ferredoxin] + 2 S-adenosyl-L-methionine = 2-methyladenosine(2503) in 23S rRNA + 5'-deoxyadenosine + L-methionine + 2 oxidized [2Fe-2S]-[ferredoxin] + S-adenosyl-L-homocysteine. It carries out the reaction adenosine(37) in tRNA + 2 reduced [2Fe-2S]-[ferredoxin] + 2 S-adenosyl-L-methionine = 2-methyladenosine(37) in tRNA + 5'-deoxyadenosine + L-methionine + 2 oxidized [2Fe-2S]-[ferredoxin] + S-adenosyl-L-homocysteine. Functionally, specifically methylates position 2 of adenine 2503 in 23S rRNA and position 2 of adenine 37 in tRNAs. m2A2503 modification seems to play a crucial role in the proofreading step occurring at the peptidyl transferase center and thus would serve to optimize ribosomal fidelity. The sequence is that of Dual-specificity RNA methyltransferase RlmN from Methylocella silvestris (strain DSM 15510 / CIP 108128 / LMG 27833 / NCIMB 13906 / BL2).